A 129-amino-acid chain; its full sequence is Large ribosomal subunit protein eL32 (129 aa).

This sequence belongs to the eukaryotic ribosomal protein eL32 family.

This Methanosarcina mazei (strain ATCC BAA-159 / DSM 3647 / Goe1 / Go1 / JCM 11833 / OCM 88) (Methanosarcina frisia) protein is Large ribosomal subunit protein eL32 (rpl32e).